A 554-amino-acid chain; its full sequence is uncharacterized protein (554 aa).

A run of 5 helical transmembrane segments spans residues 13-31 (SVAH…GVYL), 36-58 (IFGV…HFGF), 73-92 (LILF…FSSF), 99-121 (LNLL…YYLW), and 161-183 (IALG…IIAI). RCK C-terminal domains are found at residues 199–281 (KTQS…FIGK) and 282–366 (EVEL…VLGN). Helical transmembrane passes span 376–395 (IVTI…LPIA), 405–422 (LGLA…GRFG), 442–464 (IGIV…QTVV), and 468–490 (GLLY…GAIA).

It belongs to the AAE transporter (TC 2.A.81) family.

The protein resides in the cell membrane. This is an uncharacterized protein from Bacteroides thetaiotaomicron (strain ATCC 29148 / DSM 2079 / JCM 5827 / CCUG 10774 / NCTC 10582 / VPI-5482 / E50).